Consider the following 272-residue polypeptide: Undecaprenyl-diphosphatase (272 aa).

7 helical membrane passes run 6-26 (SLLI…LPVS), 45-65 (AKTF…VMFW), 92-112 (THIL…HDVI), 115-135 (LFYP…LLAA), 189-209 (YAAS…ATVL), 221-241 (ADVP…LIAI), and 251-271 (ISFI…YMVF).

The protein belongs to the UppP family.

The protein localises to the cell inner membrane. The enzyme catalyses di-trans,octa-cis-undecaprenyl diphosphate + H2O = di-trans,octa-cis-undecaprenyl phosphate + phosphate + H(+). Catalyzes the dephosphorylation of undecaprenyl diphosphate (UPP). Confers resistance to bacitracin. The protein is Undecaprenyl-diphosphatase of Pectobacterium atrosepticum (strain SCRI 1043 / ATCC BAA-672) (Erwinia carotovora subsp. atroseptica).